A 147-amino-acid chain; its full sequence is Hemoglobin subunit beta (147 aa).

Val2 is subject to N-acetylvaline. The region spanning 3 to 147 (HLTGEEKSAV…VANALAHKYH (145 aa)) is the Globin domain. Residue Thr13 is modified to Phosphothreonine. Phosphoserine is present on Ser45. An N6-acetyllysine modification is found at Lys60. Heme b is bound at residue His64. The residue at position 83 (Lys83) is an N6-acetyllysine. His93 is a heme b binding site. At Cys94 the chain carries S-nitrosocysteine. Lys145 carries the N6-acetyllysine modification.

It belongs to the globin family. Heterotetramer of two alpha chains and two beta chains. In terms of tissue distribution, red blood cells.

Involved in oxygen transport from the lung to the various peripheral tissues. In Callithrix jacchus (White-tufted-ear marmoset), this protein is Hemoglobin subunit beta (HBB).